The chain runs to 343 residues: UDP-N-acetylglucosamine--N-acetylmuramyl-(pentapeptide) pyrophosphoryl-undecaprenol N-acetylglucosamine transferase (343 aa).

UDP-N-acetyl-alpha-D-glucosamine contacts are provided by residues 10 to 12 (TGG), asparagine 113, serine 174, and glutamine 275.

The protein belongs to the glycosyltransferase 28 family. MurG subfamily.

It localises to the cell membrane. It carries out the reaction di-trans,octa-cis-undecaprenyl diphospho-N-acetyl-alpha-D-muramoyl-L-alanyl-D-glutamyl-meso-2,6-diaminopimeloyl-D-alanyl-D-alanine + UDP-N-acetyl-alpha-D-glucosamine = di-trans,octa-cis-undecaprenyl diphospho-[N-acetyl-alpha-D-glucosaminyl-(1-&gt;4)]-N-acetyl-alpha-D-muramoyl-L-alanyl-D-glutamyl-meso-2,6-diaminopimeloyl-D-alanyl-D-alanine + UDP + H(+). It participates in cell wall biogenesis; peptidoglycan biosynthesis. In terms of biological role, cell wall formation. Catalyzes the transfer of a GlcNAc subunit on undecaprenyl-pyrophosphoryl-MurNAc-pentapeptide (lipid intermediate I) to form undecaprenyl-pyrophosphoryl-MurNAc-(pentapeptide)GlcNAc (lipid intermediate II). In Wolbachia sp. subsp. Drosophila simulans (strain wRi), this protein is UDP-N-acetylglucosamine--N-acetylmuramyl-(pentapeptide) pyrophosphoryl-undecaprenol N-acetylglucosamine transferase.